The following is a 732-amino-acid chain: Cyclopenase asqI (732 aa).

Residues H168, H172, and H200 each coordinate Zn(2+).

Belongs to the tyrosinase family. Zn(2+) is required as a cofactor.

It carries out the reaction (-)-cyclopenine = viridicatin + methyl isocyanate + H(+). It catalyses the reaction (-)-4'-methoxycyclopenine = 4'-methoxyviridicatin + methyl isocyanate + H(+). Its pathway is secondary metabolite biosynthesis. It participates in alkaloid biosynthesis. The protein operates within mycotoxin biosynthesis. Cyclopenase; part of the gene cluster that mediates the biosynthesis of the aspoquinolone mycotoxins. Within the pathway, the cyclopenase asqI catalyzes the conversion of 4'-methoxycyclopenin into 4'-methoxyviridicatin. Cyclopenin can also be converted into viridicatin by asqI. The first step of the pathway is catalyzed by the nonribosomal peptide synthetase asqK that condenses anthranilic acid and O-methyl-L-tyrosine to produce 4'-methoxycyclopeptin. 4'-methoxycyclopeptin is then converted to 4'-methoxydehydrocyclopeptin by the ketoglutarate-dependent dioxygenase asqJ. AsqJ also converts its first product 4'-methoxydehydrocyclopeptin to 4'-methoxycyclopenin. The following conversion of 4'-methoxycyclopenin into 4'-methoxyviridicatin is catalyzed by the cyclopenase asqI. 4'-methoxyviridicatin is the precursor of quinolone natural products, and is further converted to quinolinone B. The prenyltransferase asqH1 then catalyzes the canonical Friedel-Crafts alkylation of quinolinone B with dimethylallyl cation to yield dimethylallyl quinolone, which is subjected to FAD-dependent dehydrogenation by the FAD-linked oxidoreductase asqF to yield conjugated aryl diene. The delta(3') double bond then serves as the site of the second alkylation with DMAPP catalyzed by the prenyltransferase asqH2 to yield a carbenium ion intermediate, which can be attacked by H(2)O to yield a styrenyl quinolone containing a C3'-hydroxyprenyl chain. The FAD-dependent monooxygenase asqG performs epoxidation of the terminal C7'-C8' olefin. Finally, after dehydratation of the epoxide at C3 by asqC, the quinolone epoxide rearrangement protein asqO catalyzes an enzymatic 3-exo-tet cyclization to yield the cyclopropyl-THF ring system in aspoquinolone. This chain is Cyclopenase asqI, found in Emericella nidulans (strain FGSC A4 / ATCC 38163 / CBS 112.46 / NRRL 194 / M139) (Aspergillus nidulans).